The sequence spans 230 residues: UPF0173 metal-dependent hydrolase Rsph17029_0942 (230 aa).

It belongs to the UPF0173 family.

The chain is UPF0173 metal-dependent hydrolase Rsph17029_0942 from Cereibacter sphaeroides (strain ATCC 17029 / ATH 2.4.9) (Rhodobacter sphaeroides).